A 121-amino-acid polypeptide reads, in one-letter code: uncharacterized protein (121 aa).

Positions 85–111 (NANNDDYESPYKTPKIKSNPSLDSSGS) are disordered. Over residues 100-111 (IKSNPSLDSSGS) the composition is skewed to polar residues.

This is an uncharacterized protein from Dictyostelium discoideum (Social amoeba).